The following is a 200-amino-acid chain: Inner membrane-spanning protein YciB (200 aa).

6 consecutive transmembrane segments (helical) span residues 7–27 (HPLFKLATELGPLIVFFVVNA), 32–52 (FAATGAFMVAIVAAMIASYVV), 56–76 (VPLMAIVTGIVVLVFGTLTLV), 93–113 (LFAAVLGGGLLFNRSFIAIMF), 126–146 (ILTFRWALFFAAMAVLNEIIW), and 153–173 (FWVGFKAFGVVPLTMIFAIAQ).

It belongs to the YciB family.

Its subcellular location is the cell inner membrane. Plays a role in cell envelope biogenesis, maintenance of cell envelope integrity and membrane homeostasis. The chain is Inner membrane-spanning protein YciB from Bradyrhizobium sp. (strain BTAi1 / ATCC BAA-1182).